The primary structure comprises 112 residues: Nitrogen regulatory protein P-II (112 aa).

At Tyr51 the chain carries O-UMP-tyrosine.

This sequence belongs to the P(II) protein family. In terms of assembly, homotrimer.

Its function is as follows. P-II indirectly controls the transcription of the glutamine synthetase gene (glnA). P-II prevents NR-II-catalyzed conversion of NR-I to NR-I-phosphate, the transcriptional activator of glnA. When P-II is uridylylated to P-II-UMP, these events are reversed. When the ratio of Gln to 2-ketoglutarate decreases, P-II is uridylylated to P-II-UMP, which causes the deadenylation of glutamine synthetase, so activating the enzyme. This Rhodospirillum rubrum (strain ATCC 11170 / ATH 1.1.1 / DSM 467 / LMG 4362 / NCIMB 8255 / S1) protein is Nitrogen regulatory protein P-II (glnB).